Consider the following 190-residue polypeptide: Photosynthetic NDH subunit of lumenal location 2, chloroplastic (190 aa).

The N-terminal 31 residues, 1 to 31 (MSSFTTTNTPPPYLLRKIYHRRVNQPFSVVC), are a transit peptide targeting the chloroplast. The transit peptide at 32–68 (CTGEPQQDIFTRRRTLTSLITFTVIGGATSSALAQEK) directs the protein to the thylakoid. Coiled-coil stretches lie at residues 87–107 (EDAA…REML) and 139–159 (ESRR…MSEL).

The protein belongs to the PsbQ family. As to quaternary structure, part of the chloroplast NDH complex, composed of a mixture of chloroplast and nucleus encoded subunits. Component of the NDH lumenal subcomplex, at least composed of PnsL1, PnsL2, PnsL3, PnsL4 and PnsL5.

It is found in the plastid. The protein resides in the chloroplast thylakoid membrane. Functionally, NDH shuttles electrons from NAD(P)H:plastoquinone, via FMN and iron-sulfur (Fe-S) centers, to quinones in the photosynthetic chain and possibly in a chloroplast respiratory chain. The immediate electron acceptor for the enzyme in this species is believed to be plastoquinone. Couples the redox reaction to proton translocation, and thus conserves the redox energy in a proton gradient. Required for both formation and activity of the chloroplast NAD(P)H dehydrogenase (NDH) complex. The chain is Photosynthetic NDH subunit of lumenal location 2, chloroplastic from Arabidopsis thaliana (Mouse-ear cress).